We begin with the raw amino-acid sequence, 481 residues long: MSRALMIQGTGSNVGKSMLAAGLCRIARNRGLSVAPFKPQNMSNNAAVTADGGEIGRAQALQAMACGLEPHTDMNPVLLKPETETGSQVVVQGKRFTTVRARDYAKLKPQLMQAVLDSFKRLKAAHDLVIVEGAGSPAEVNLRNGDIANMGFAQASGTPVVLCGDIDRGGVIAQIVGTQAVMSAEDVALVRGFMINKFRGDPSLFDDGYKLIEQHTGWQGFGVIPWFADAGNLPAEDALDITTRTRDTGLHIVCLRLSRIANFDDMDPLAQEPGVRLTMLNAGEAIPGDADMVIIPGSKSTRGDLAYLRAQGWDLDLRAHLRRGGHVLGICGGYQMLGGSVADPEGVEGPAGTDEGLGLLDVETVMTGDKRLTRVAAIHAPSGTAFNGYEIHIGRTSGPDAARPFAVVNGQPEGAISGDGRVSGSYLHGMFRDDAFRAAWLAQFGVAQSVSYDATVQATLDALAAHLEGVMDIDALLDVRL.

In terms of domain architecture, GATase cobBQ-type spans 249 to 436 (GLHIVCLRLS…LHGMFRDDAF (188 aa)). Cysteine 331 acts as the Nucleophile in catalysis. Histidine 428 is an active-site residue.

This sequence belongs to the CobB/CobQ family. CobQ subfamily.

Its pathway is cofactor biosynthesis; adenosylcobalamin biosynthesis. Functionally, catalyzes amidations at positions B, D, E, and G on adenosylcobyrinic A,C-diamide. NH(2) groups are provided by glutamine, and one molecule of ATP is hydrogenolyzed for each amidation. The sequence is that of Cobyric acid synthase from Jannaschia sp. (strain CCS1).